The chain runs to 198 residues: T-cell surface glycoprotein CD3 epsilon chain (198 aa).

The first 21 residues, 1–21 (MRAGTLWRVLALWLLSVAAWG), serve as a signal peptide directing secretion. Residues 22 to 120 (QEDDDHADDY…EACMEVDLTT (99 aa)) lie on the Extracellular side of the membrane. Residues 28–106 (ADDYTQKLFT…KENEHILYLK (79 aa)) form the Ig-like domain. A disulfide bridge links Cys-49 with Cys-90. The chain crosses the membrane as a helical span at residues 121-141 (VASIVVADVCVTLGLLLLVYY). The Cytoplasmic segment spans residues 142–198 (WSKNRKAKCKPVTRGAGAGGRPRGQNKERPPPVPNPDYEPIRKGQRDLYSGLNQRGI). A disordered region spans residues 153–198 (VTRGAGAGGRPRGQNKERPPPVPNPDYEPIRKGQRDLYSGLNQRGI). Residues 166-183 (QNKERPPPVPNPDYEPIR) are NUMB-binding region. The ITAM domain occupies 169-196 (ERPPPVPNPDYEPIRKGQRDLYSGLNQR). The interval 170 to 177 (RPPPVPNP) is proline-rich sequence. Residues Tyr-179 and Tyr-190 each carry the phosphotyrosine modification.

In terms of assembly, the TCR-CD3 complex is composed of a CD3D/CD3E and a CD3G/CD3E heterodimers that preferentially associate with TCRalpha and TCRbeta, respectively, to form TCRalpha/CD3E/CD3G and TCRbeta/CD3G/CD3E trimers. In turn, the hexamer interacts with CD3Z homodimer to form the TCR-CD3 complex. Alternatively, TCRalpha and TCRbeta can be replaced by TCRgamma and TCRdelta. Interacts with CD6. Interacts (via Proline-rich sequence) with NCK1; the interaction is ligand dependent but independent of tyrosine kinase activation. Phosphorylated on Tyr residues after T-cell receptor triggering by LCK in association with CD4/CD8.

Its subcellular location is the cell membrane. Functionally, part of the TCR-CD3 complex present on T-lymphocyte cell surface that plays an essential role in adaptive immune response. When antigen presenting cells (APCs) activate T-cell receptor (TCR), TCR-mediated signals are transmitted across the cell membrane by the CD3 chains CD3D, CD3E, CD3G and CD3Z. All CD3 chains contain immunoreceptor tyrosine-based activation motifs (ITAMs) in their cytoplasmic domain. Upon TCR engagement, these motifs become phosphorylated by Src family protein tyrosine kinases LCK and FYN, resulting in the activation of downstream signaling pathways. In addition of this role of signal transduction in T-cell activation, CD3E plays an essential role in correct T-cell development. Also participates in internalization and cell surface down-regulation of TCR-CD3 complexes via endocytosis sequences present in CD3E cytosolic region. In addition to its role as a TCR coreceptor, it serves as a receptor for ITPRIPL1. Ligand recognition inhibits T-cell activation by promoting interaction with NCK1, which prevents CD3E-ZAP70 interaction and blocks the ERK-NFkB signaling cascade and calcium influx. This Oryctolagus cuniculus (Rabbit) protein is T-cell surface glycoprotein CD3 epsilon chain (CD3E).